The primary structure comprises 693 residues: Tegument protein UL47 (693 aa).

Disordered stretches follow at residues 1–32 (MSAR…DGVG) and 48–126 (ELEA…GYLG). Positions 48 to 57 (ELEALEEMAG) are enriched in acidic residues. Positions 50–75 (EALEEMAGDEPPVRRRREGPRARRRR) are RNA-binding. The Nuclear localization signal motif lies at 63–75 (RRRREGPRARRRR). Basic residues predominate over residues 63-75 (RRRREGPRARRRR). The short motif at 647–670 (SVLGPGVRVVDIMSQFRKLLMGDE) is the Nuclear export signal element.

The protein belongs to the alphaherpesvirinae HHV-1 UL47 family. As to quaternary structure, interacts with US3 kinase. Interacts with UL31 and UL34; these interactions seem important for efficient virion nuclear egress. Interacts with UL41/VHS. Post-translationally, phosphorylated by US3. This phosphorylation is required for proper nuclear localization.

It is found in the virion tegument. The protein resides in the host nucleus. Its subcellular location is the host cytoplasm. In terms of biological role, tegument protein that can bind to various RNA transcripts. Plays a role in the attenuation of selective viral and cellular mRNA degradation by modulating the activity of host shutoff RNase UL41/VHS. Also plays a role in the primary envelopment of virions in the perinuclear space, probably by interacting with two nuclear egress proteins UL31 and UL34. The sequence is that of Tegument protein UL47 from Human herpesvirus 1 (strain F) (HHV-1).